The chain runs to 322 residues: Ribosomal RNA small subunit methyltransferase H (322 aa).

S-adenosyl-L-methionine is bound by residues 40-42, Asp-60, Phe-84, Asp-106, and Gln-113; that span reads GGH.

The protein belongs to the methyltransferase superfamily. RsmH family.

It localises to the cytoplasm. It carries out the reaction cytidine(1402) in 16S rRNA + S-adenosyl-L-methionine = N(4)-methylcytidine(1402) in 16S rRNA + S-adenosyl-L-homocysteine + H(+). Its function is as follows. Specifically methylates the N4 position of cytidine in position 1402 (C1402) of 16S rRNA. The chain is Ribosomal RNA small subunit methyltransferase H from Mannheimia succiniciproducens (strain KCTC 0769BP / MBEL55E).